Consider the following 291-residue polypeptide: Syntaxin-1A homolog (291 aa).

A disordered region spans residues 1-24 (MTKDRLSALKAAQSEDEQDDDMHM). Residues 1–266 (MTKDRLSALK…QYQSKARRKK (266 aa)) lie on the Cytoplasmic side of the membrane. The stretch at 69 to 95 (NDQKTKEELDELMAVIKRAANKVRGKL) forms a coiled coil. The t-SNARE coiled-coil homology domain maps to 193-255 (LADIEARHND…DRAVADTKKA (63 aa)). A helical; Anchor for type IV membrane protein membrane pass occupies residues 267 to 287 (ICILVTGVILITGLIIFILFY). The Extracellular segment spans residues 288–291 (AKVL).

Belongs to the syntaxin family. As to quaternary structure, interacts (via N-terminus, in open or in closed conformation) with unc-18; the interaction is direct. Interaction in open conformation with unc-18 promotes synaptic vesicle docking and tethering. Interaction via N-terminus with unc-18 mediates the secretion of the neurotransmitter acetylcholine from cholinergic motor neurons. Interaction with unc-18 is reduced in the presence of unc-13. In terms of tissue distribution, expressed throughout the head ganglion, nerve ring, ventral cord, dorsal cord, intestine, vulva and spermatheca.

It is found in the cell membrane. It localises to the cell projection. The protein resides in the axon. The protein localises to the dendrite. Its subcellular location is the perikaryon. Plays a critical role in several secretory processes, including cuticle secretion and neurotransmitter release, and probably assists in neuronal membrane maturation or the final stages of neuronal differentiation. Plays a role in synaptic vesicle docking and tethering through its association with unc-18. Through binding to unc-18 mediates the release of the neurotransmitter acetylcholine from cholinergic motor neurons, and thereby promotes locomotory behaviors. Essential for embryonic viability and development. Has a role in dauer formation and adult life span. Required for locomotion. Probably by regulating neuronal transmission downstream of lin-3 and receptor lin-23 and phospholipase plc-3 and upstream of innexin unc-7 and egl-4/PKG in ALA neurons, involved in the decrease in pharyngeal pumping during the quiescent state that precedes each larval molt. In Caenorhabditis elegans, this protein is Syntaxin-1A homolog.